The following is a 337-amino-acid chain: Holliday junction branch migration complex subunit RuvB (337 aa).

Residues Met1–Tyr179 are large ATPase domain (RuvB-L). ATP is bound by residues Leu18, Arg19, Gly60, Lys63, Thr64, Ser65, Glu126–Tyr128, Arg169, Tyr179, and Arg216. Mg(2+) is bound at residue Thr64. Positions Ser180 to Leu250 are small ATPAse domain (RuvB-S). Positions Glu253–Lys337 are head domain (RuvB-H). DNA is bound by residues Lys308 and Arg313.

This sequence belongs to the RuvB family. In terms of assembly, homohexamer. Forms an RuvA(8)-RuvB(12)-Holliday junction (HJ) complex. HJ DNA is sandwiched between 2 RuvA tetramers; dsDNA enters through RuvA and exits via RuvB. An RuvB hexamer assembles on each DNA strand where it exits the tetramer. Each RuvB hexamer is contacted by two RuvA subunits (via domain III) on 2 adjacent RuvB subunits; this complex drives branch migration. In the full resolvosome a probable DNA-RuvA(4)-RuvB(12)-RuvC(2) complex forms which resolves the HJ.

It localises to the cytoplasm. The catalysed reaction is ATP + H2O = ADP + phosphate + H(+). The RuvA-RuvB-RuvC complex processes Holliday junction (HJ) DNA during genetic recombination and DNA repair, while the RuvA-RuvB complex plays an important role in the rescue of blocked DNA replication forks via replication fork reversal (RFR). RuvA specifically binds to HJ cruciform DNA, conferring on it an open structure. The RuvB hexamer acts as an ATP-dependent pump, pulling dsDNA into and through the RuvAB complex. RuvB forms 2 homohexamers on either side of HJ DNA bound by 1 or 2 RuvA tetramers; 4 subunits per hexamer contact DNA at a time. Coordinated motions by a converter formed by DNA-disengaged RuvB subunits stimulates ATP hydrolysis and nucleotide exchange. Immobilization of the converter enables RuvB to convert the ATP-contained energy into a lever motion, pulling 2 nucleotides of DNA out of the RuvA tetramer per ATP hydrolyzed, thus driving DNA branch migration. The RuvB motors rotate together with the DNA substrate, which together with the progressing nucleotide cycle form the mechanistic basis for DNA recombination by continuous HJ branch migration. Branch migration allows RuvC to scan DNA until it finds its consensus sequence, where it cleaves and resolves cruciform DNA. The chain is Holliday junction branch migration complex subunit RuvB from Chlamydia abortus (strain DSM 27085 / S26/3) (Chlamydophila abortus).